We begin with the raw amino-acid sequence, 366 residues long: tRNA/tmRNA (uracil-C(5))-methyltransferase (366 aa).

Gln-190, Tyr-218, Asn-223, Glu-239, and Asp-299 together coordinate S-adenosyl-L-methionine. Cys-324 acts as the Nucleophile in catalysis. The active-site Proton acceptor is the Glu-358.

It belongs to the class I-like SAM-binding methyltransferase superfamily. RNA M5U methyltransferase family. TrmA subfamily.

It catalyses the reaction uridine(54) in tRNA + S-adenosyl-L-methionine = 5-methyluridine(54) in tRNA + S-adenosyl-L-homocysteine + H(+). It carries out the reaction uridine(341) in tmRNA + S-adenosyl-L-methionine = 5-methyluridine(341) in tmRNA + S-adenosyl-L-homocysteine + H(+). In terms of biological role, dual-specificity methyltransferase that catalyzes the formation of 5-methyluridine at position 54 (m5U54) in all tRNAs, and that of position 341 (m5U341) in tmRNA (transfer-mRNA). This is tRNA/tmRNA (uracil-C(5))-methyltransferase from Escherichia coli O81 (strain ED1a).